Consider the following 182-residue polypeptide: UPF0149 protein PM1723 (182 aa).

This sequence belongs to the UPF0149 family.

This Pasteurella multocida (strain Pm70) protein is UPF0149 protein PM1723.